The sequence spans 1143 residues: Major DNA-binding protein (1143 aa).

A required for nuclear localization region spans residues 1140–1143; that stretch reads RMRL.

Belongs to the herpesviridae major DNA-binding protein family. In terms of assembly, homooligomers. Forms double-helical filaments necessary for the formation of replication compartments within the host nucleus. Interacts with the origin-binding protein. Interacts with the helicase primase complex; this interaction stimulates primer synthesis activity of the helicase-primase complex. Interacts with the DNA polymerase. Interacts with the alkaline exonuclease; this interaction increases its nuclease processivity.

It is found in the host nucleus. Plays several crucial roles in viral infection. Participates in the opening of the viral DNA origin to initiate replication by interacting with the origin-binding protein. May disrupt loops, hairpins and other secondary structures present on ssDNA to reduce and eliminate pausing of viral DNA polymerase at specific sites during elongation. Promotes viral DNA recombination by performing strand-transfer, characterized by the ability to transfer a DNA strand from a linear duplex to a complementary single-stranded DNA circle. Can also catalyze the renaturation of complementary single strands. Additionally, reorganizes the host cell nucleus, leading to the formation of prereplicative sites and replication compartments. This process is driven by the protein which can form double-helical filaments in the absence of DNA. The protein is Major DNA-binding protein of Elephantid herpesvirus 1 (isolate Asian elephant/Berlin/Kiba/1998) (EIHV-1).